Here is a 573-residue protein sequence, read N- to C-terminus: Potassium-transporting ATPase potassium-binding subunit (573 aa).

A run of 10 helical transmembrane segments spans residues 6 to 26, 66 to 86, 135 to 155, 177 to 197, 257 to 277, 283 to 303, 382 to 402, 428 to 448, 493 to 513, and 537 to 557; these read ILFA…GSYI, FFSL…ILLL, ALAV…IALI, VFWI…FQGV, IQMV…GKWV, GWLI…VMTI, IFGG…LAVF, MFAL…AAVI, ITIA…VIML, and FIFA…TIFP.

This sequence belongs to the KdpA family. As to quaternary structure, the system is composed of three essential subunits: KdpA, KdpB and KdpC.

The protein localises to the cell inner membrane. Part of the high-affinity ATP-driven potassium transport (or Kdp) system, which catalyzes the hydrolysis of ATP coupled with the electrogenic transport of potassium into the cytoplasm. This subunit binds the periplasmic potassium ions and delivers the ions to the membrane domain of KdpB through an intramembrane tunnel. The sequence is that of Potassium-transporting ATPase potassium-binding subunit from Francisella tularensis subsp. mediasiatica (strain FSC147).